The chain runs to 430 residues: Tol-Pal system protein TolB (430 aa).

The signal sequence occupies residues 1–21 (MKQAFRLMVGLLVLWASVLHA).

This sequence belongs to the TolB family. The Tol-Pal system is composed of five core proteins: the inner membrane proteins TolA, TolQ and TolR, the periplasmic protein TolB and the outer membrane protein Pal. They form a network linking the inner and outer membranes and the peptidoglycan layer.

It is found in the periplasm. Functionally, part of the Tol-Pal system, which plays a role in outer membrane invagination during cell division and is important for maintaining outer membrane integrity. TolB occupies a key intermediary position in the Tol-Pal system because it communicates directly with both membrane-embedded components, Pal in the outer membrane and TolA in the inner membrane. The sequence is that of Tol-Pal system protein TolB from Edwardsiella ictaluri (strain 93-146).